Reading from the N-terminus, the 97-residue chain is ESAT-6-like protein EsxG (97 aa).

This sequence belongs to the WXG100 family. CFP-10 subfamily. Forms a tight 1:1 complex with EsxH.

The protein localises to the secreted. The chain is ESAT-6-like protein EsxG from Mycolicibacterium smegmatis (strain ATCC 700084 / mc(2)155) (Mycobacterium smegmatis).